The sequence spans 170 residues: Ribosome maturation factor RimP (170 aa).

This sequence belongs to the RimP family.

Its subcellular location is the cytoplasm. Functionally, required for maturation of 30S ribosomal subunits. The sequence is that of Ribosome maturation factor RimP from Acidothermus cellulolyticus (strain ATCC 43068 / DSM 8971 / 11B).